The primary structure comprises 122 residues: uncharacterized protein (122 aa).

A run of 2 helical transmembrane segments spans residues P43–I63 and A76–F96.

The protein localises to the membrane. This is an uncharacterized protein from Schizosaccharomyces pombe (strain 972 / ATCC 24843) (Fission yeast).